Consider the following 351-residue polypeptide: Nicotinate-nucleotide--dimethylbenzimidazole phosphoribosyltransferase (351 aa).

Residue glutamate 317 is the Proton acceptor of the active site.

This sequence belongs to the CobT family.

It carries out the reaction 5,6-dimethylbenzimidazole + nicotinate beta-D-ribonucleotide = alpha-ribazole 5'-phosphate + nicotinate + H(+). Its pathway is nucleoside biosynthesis; alpha-ribazole biosynthesis; alpha-ribazole from 5,6-dimethylbenzimidazole: step 1/2. Catalyzes the synthesis of alpha-ribazole-5'-phosphate from nicotinate mononucleotide (NAMN) and 5,6-dimethylbenzimidazole (DMB). The sequence is that of Nicotinate-nucleotide--dimethylbenzimidazole phosphoribosyltransferase from Pseudomonas aeruginosa (strain ATCC 15692 / DSM 22644 / CIP 104116 / JCM 14847 / LMG 12228 / 1C / PRS 101 / PAO1).